Here is a 350-residue protein sequence, read N- to C-terminus: HRLAGRHPQDNYEDSTQSSIFTYTNSNSTRGPFEGPNYHIAPRWVYHLTSVWMLFVVVASVFTNGLVLAATMKFKKLRHPLNWILVNLAIADLAETVIASTISVVNQVHGYFVLGHPMCVLEGYTVSLCGITGLWSLAIISWERWLVVCKPFGNVRFDAKLAIVGVAFSWIWSAVWTAPPIFGWSRYWPHGLKTSCGPDVFSGSSYPGVQSYMIVLMITCCFLPLGIIVLCYLQVWLAIRAVAKQQKESESTQKAEKEVTRMVVVMIVAYCVCWGPYTFFACFAAANPGYAFHPLMAALPAYFAKSATIYNPIIYVFMNRQFRNCILQLFGKKVDDGSELSSASKTEVSS.

Residues 1–45 (HRLAGRHPQDNYEDSTQSSIFTYTNSNSTRGPFEGPNYHIAPRWV) lie on the Extracellular side of the membrane. N-linked (GlcNAc...) asparagine glycosylation is present at Asn27. Residues 46-70 (YHLTSVWMLFVVVASVFTNGLVLAA) form a helical membrane-spanning segment. Residues 71–82 (TMKFKKLRHPLN) lie on the Cytoplasmic side of the membrane. A helical transmembrane segment spans residues 83 to 108 (WILVNLAIADLAETVIASTISVVNQV). At 109–122 (HGYFVLGHPMCVLE) the chain is on the extracellular side. Cysteines 119 and 196 form a disulfide. A helical membrane pass occupies residues 123 to 142 (GYTVSLCGITGLWSLAIISW). Residues 143-161 (ERWLVVCKPFGNVRFDAKL) lie on the Cytoplasmic side of the membrane. Residues 162 to 185 (AIVGVAFSWIWSAVWTAPPIFGWS) form a helical membrane-spanning segment. Topologically, residues 186 to 211 (RYWPHGLKTSCGPDVFSGSSYPGVQS) are extracellular. A helical transmembrane segment spans residues 212-239 (YMIVLMITCCFLPLGIIVLCYLQVWLAI). Topologically, residues 240–261 (RAVAKQQKESESTQKAEKEVTR) are cytoplasmic. The chain crosses the membrane as a helical span at residues 262–285 (MVVVMIVAYCVCWGPYTFFACFAA). Over 286 to 293 (ANPGYAFH) the chain is Extracellular. A helical transmembrane segment spans residues 294-318 (PLMAALPAYFAKSATIYNPIIYVFM). Position 305 is an N6-(retinylidene)lysine (Lys305). Residues 319-350 (NRQFRNCILQLFGKKVDDGSELSSASKTEVSS) are Cytoplasmic-facing.

It belongs to the G-protein coupled receptor 1 family. Opsin subfamily. Phosphorylated on some or all of the serine and threonine residues present in the C-terminal region. As to expression, the color pigments are found in the cone photoreceptor cells.

The protein localises to the membrane. Functionally, visual pigments are the light-absorbing molecules that mediate vision. They consist of an apoprotein, opsin, covalently linked to cis-retinal. This is Opsin, longwave 563 nm from Callithrix jacchus (White-tufted-ear marmoset).